The sequence spans 526 residues: Phosphoenolpyruvate carboxykinase (ATP) (526 aa).

Arg55, Tyr190, and Lys196 together coordinate substrate. Residues Lys196, His215, and 231–239 contribute to the ATP site; that span reads GLSGTGKTT. Mn(2+) is bound by residues Lys196 and His215. Asp252 contacts Mn(2+). The ATP site is built by Glu280, Arg317, and Thr442. Arg317 is a binding site for substrate.

It belongs to the phosphoenolpyruvate carboxykinase (ATP) family. Mn(2+) is required as a cofactor.

It localises to the cytoplasm. The enzyme catalyses oxaloacetate + ATP = phosphoenolpyruvate + ADP + CO2. It functions in the pathway carbohydrate biosynthesis; gluconeogenesis. Involved in the gluconeogenesis. Catalyzes the conversion of oxaloacetate (OAA) to phosphoenolpyruvate (PEP) through direct phosphoryl transfer between the nucleoside triphosphate and OAA. The protein is Phosphoenolpyruvate carboxykinase (ATP) of Alkaliphilus oremlandii (strain OhILAs) (Clostridium oremlandii (strain OhILAs)).